We begin with the raw amino-acid sequence, 559 residues long: CRISPR-associated exonuclease Cas4/endonuclease Cas1 fusion (559 aa).

The interval 1–198 is CRISPR-associated exonuclease Cas4; it reads MAETDGSIPL…RCSLVGICLP (198 aa). Residue cysteine 22 participates in [4Fe-4S] cluster binding. Aspartate 87 and aspartate 100 together coordinate Mn(2+). The [4Fe-4S] cluster site is built by cysteine 187, cysteine 190, and cysteine 196. The tract at residues 224–559 is CRISPR-associated endonuclease Cas1; that stretch reads LYVQSPKAYV…IPAYPNFVTR (336 aa). Mn(2+)-binding residues include glutamate 380, histidine 451, and glutamate 466.

In the N-terminal section; belongs to the CRISPR-associated exonuclease Cas4 family. This sequence in the C-terminal section; belongs to the CRISPR-associated endonuclease Cas1 family. Homodimer, forms a heterotetramer with a Cas2 homodimer. Requires [4Fe-4S] cluster as cofactor. Mg(2+) is required as a cofactor. It depends on Mn(2+) as a cofactor.

The catalysed reaction is exonucleolytic cleavage in the 5'- to 3'-direction to yield nucleoside 3'-phosphates.. In terms of biological role, CRISPR (clustered regularly interspaced short palindromic repeat), is an adaptive immune system that provides protection against mobile genetic elements (viruses, transposable elements and conjugative plasmids). CRISPR clusters contain spacers, sequences complementary to antecedent mobile elements, and target invading nucleic acids. CRISPR clusters are transcribed and processed into CRISPR RNA (crRNA). The Cas4 region acts as a ssDNA exonuclease, while the Cas1 region acts as a dsDNA endonuclease. Involved in the integration of spacer DNA into the CRISPR cassette. This chain is CRISPR-associated exonuclease Cas4/endonuclease Cas1 fusion (cas4-cas1), found in Geobacter sulfurreducens (strain ATCC 51573 / DSM 12127 / PCA).